Consider the following 130-residue polypeptide: Small ribosomal subunit protein uS11 (130 aa).

The protein belongs to the universal ribosomal protein uS11 family. In terms of assembly, part of the 30S ribosomal subunit. Interacts with proteins S7 and S18. Binds to IF-3.

Functionally, located on the platform of the 30S subunit, it bridges several disparate RNA helices of the 16S rRNA. Forms part of the Shine-Dalgarno cleft in the 70S ribosome. This Campylobacter fetus subsp. fetus (strain 82-40) protein is Small ribosomal subunit protein uS11.